Here is a 542-residue protein sequence, read N- to C-terminus: CTP synthase (542 aa).

Positions 1 to 265 (MARYVFITGG…DSEVLAAFGI (265 aa)) are amidoligase domain. Serine 13 provides a ligand contact to CTP. Serine 13 is a binding site for UTP. Residues 14–19 (SLGKGI) and aspartate 71 each bind ATP. Mg(2+) is bound by residues aspartate 71 and glutamate 139. Residues 146-148 (DIE), 186-191 (KTKPTQ), and lysine 222 each bind CTP. UTP-binding positions include 186-191 (KTKPTQ) and lysine 222. The region spanning 291-541 (TIAIVGKYTG…VEAAVEQSRL (251 aa)) is the Glutamine amidotransferase type-1 domain. Residue glycine 353 coordinates L-glutamine. Cysteine 380 (nucleophile; for glutamine hydrolysis) is an active-site residue. L-glutamine-binding positions include 381 to 384 (FGMQ), glutamate 404, and arginine 469. Active-site residues include histidine 514 and glutamate 516.

The protein belongs to the CTP synthase family. As to quaternary structure, homotetramer.

It catalyses the reaction UTP + L-glutamine + ATP + H2O = CTP + L-glutamate + ADP + phosphate + 2 H(+). It carries out the reaction L-glutamine + H2O = L-glutamate + NH4(+). The enzyme catalyses UTP + NH4(+) + ATP = CTP + ADP + phosphate + 2 H(+). Its pathway is pyrimidine metabolism; CTP biosynthesis via de novo pathway; CTP from UDP: step 2/2. With respect to regulation, allosterically activated by GTP, when glutamine is the substrate; GTP has no effect on the reaction when ammonia is the substrate. The allosteric effector GTP functions by stabilizing the protein conformation that binds the tetrahedral intermediate(s) formed during glutamine hydrolysis. Inhibited by the product CTP, via allosteric rather than competitive inhibition. Functionally, catalyzes the ATP-dependent amination of UTP to CTP with either L-glutamine or ammonia as the source of nitrogen. Regulates intracellular CTP levels through interactions with the four ribonucleotide triphosphates. The chain is CTP synthase from Agrobacterium fabrum (strain C58 / ATCC 33970) (Agrobacterium tumefaciens (strain C58)).